The chain runs to 440 residues: Translation initiation factor eIF2B subunit gamma (440 aa).

This sequence belongs to the eIF-2B gamma/epsilon subunits family. As to quaternary structure, component of the translation initiation factor 2B (eIF2B) complex which is a heterodecamer of two sets of five different subunits: alpha, beta, gamma, delta and epsilon. Subunits alpha, beta and delta comprise a regulatory subcomplex and subunits epsilon and gamma comprise a catalytic subcomplex. Within the complex, the hexameric regulatory complex resides at the center, with the two heterodimeric catalytic subcomplexes bound on opposite sides.

Its subcellular location is the cytoplasm. The protein resides in the cytosol. Acts as a component of the translation initiation factor 2B (eIF2B) complex, which catalyzes the exchange of GDP for GTP on the eukaryotic initiation factor 2 (eIF2) complex gamma subunit. Its guanine nucleotide exchange factor activity is repressed when bound to eIF2 complex phosphorylated on the alpha subunit, thereby limiting the amount of methionyl-initiator methionine tRNA available to the ribosome and consequently global translation is repressed. The polypeptide is Translation initiation factor eIF2B subunit gamma (eif2b3) (Dictyostelium discoideum (Social amoeba)).